The primary structure comprises 320 residues: Non-structural protein 5 (320 aa).

The chain is Non-structural protein 5 (S9) from Lymantria dispar (Gypsy moth).